A 102-amino-acid chain; its full sequence is Small ribosomal subunit protein uS10 (102 aa).

It belongs to the universal ribosomal protein uS10 family. In terms of assembly, part of the 30S ribosomal subunit.

In terms of biological role, involved in the binding of tRNA to the ribosomes. The chain is Small ribosomal subunit protein uS10 from Acidithiobacillus ferrooxidans (strain ATCC 53993 / BNL-5-31) (Leptospirillum ferrooxidans (ATCC 53993)).